The following is a 763-amino-acid chain: Serine/threonine-protein kinase PknG (763 aa).

A disordered region spans residues 1–32 (MKREHMDHDTEDVGQAAQRADPPSGTTEGRLQ). The region spanning 160–406 (YEVKGCIAHG…SAEEMSAQLM (247 aa)) is the Protein kinase domain. Residues 166 to 174 (IAHGGLGWV) and Lys-190 contribute to the ATP site. The Proton acceptor role is filled by Asp-289.

Belongs to the protein kinase superfamily. Ser/Thr protein kinase family. In terms of processing, autophosphorylated.

The catalysed reaction is L-seryl-[protein] + ATP = O-phospho-L-seryl-[protein] + ADP + H(+). The enzyme catalyses L-threonyl-[protein] + ATP = O-phospho-L-threonyl-[protein] + ADP + H(+). In Mycobacterium leprae (strain TN), this protein is Serine/threonine-protein kinase PknG (pknG).